The primary structure comprises 282 residues: 4-hydroxy-3-methylbut-2-enyl diphosphate reductase (282 aa).

Position 14 (C14) interacts with [4Fe-4S] cluster. Residues H43 and H78 each contribute to the (2E)-4-hydroxy-3-methylbut-2-enyl diphosphate site. Residues H43 and H78 each contribute to the dimethylallyl diphosphate site. Isopentenyl diphosphate-binding residues include H43 and H78. Position 100 (C100) interacts with [4Fe-4S] cluster. Residue H128 participates in (2E)-4-hydroxy-3-methylbut-2-enyl diphosphate binding. H128 is a binding site for dimethylallyl diphosphate. H128 contacts isopentenyl diphosphate. The active-site Proton donor is E130. Residue T164 participates in (2E)-4-hydroxy-3-methylbut-2-enyl diphosphate binding. C192 lines the [4Fe-4S] cluster pocket. (2E)-4-hydroxy-3-methylbut-2-enyl diphosphate-binding residues include S220, S221, N222, and S266. Dimethylallyl diphosphate-binding residues include S220, S221, N222, and S266. Isopentenyl diphosphate is bound by residues S220, S221, N222, and S266.

Belongs to the IspH family. The cofactor is [4Fe-4S] cluster.

The enzyme catalyses isopentenyl diphosphate + 2 oxidized [2Fe-2S]-[ferredoxin] + H2O = (2E)-4-hydroxy-3-methylbut-2-enyl diphosphate + 2 reduced [2Fe-2S]-[ferredoxin] + 2 H(+). It catalyses the reaction dimethylallyl diphosphate + 2 oxidized [2Fe-2S]-[ferredoxin] + H2O = (2E)-4-hydroxy-3-methylbut-2-enyl diphosphate + 2 reduced [2Fe-2S]-[ferredoxin] + 2 H(+). Its pathway is isoprenoid biosynthesis; dimethylallyl diphosphate biosynthesis; dimethylallyl diphosphate from (2E)-4-hydroxy-3-methylbutenyl diphosphate: step 1/1. It functions in the pathway isoprenoid biosynthesis; isopentenyl diphosphate biosynthesis via DXP pathway; isopentenyl diphosphate from 1-deoxy-D-xylulose 5-phosphate: step 6/6. Functionally, catalyzes the conversion of 1-hydroxy-2-methyl-2-(E)-butenyl 4-diphosphate (HMBPP) into a mixture of isopentenyl diphosphate (IPP) and dimethylallyl diphosphate (DMAPP). Acts in the terminal step of the DOXP/MEP pathway for isoprenoid precursor biosynthesis. The polypeptide is 4-hydroxy-3-methylbut-2-enyl diphosphate reductase (Clostridium perfringens (strain ATCC 13124 / DSM 756 / JCM 1290 / NCIMB 6125 / NCTC 8237 / Type A)).